Here is a 302-residue protein sequence, read N- to C-terminus: Beta-1,2-mannobiose phosphorylase (302 aa).

This sequence belongs to the glycosyl hydrolase 130 family. As to quaternary structure, monomer.

It carries out the reaction beta-D-mannopyranosyl-(1-&gt;2)-D-mannopyranose + phosphate = alpha-D-mannose 1-phosphate + D-mannose. It participates in nucleotide-sugar biosynthesis; GDP-alpha-D-mannose biosynthesis. In terms of biological role, probably involved in a salvage pathway for GDP-D-mannose biosynthesis. Catalyzes the reversible phosphorolysis of 1,2-beta-oligomannan. In phosphorolytic reactions, prefers beta-1,2-mannobiose (beta-1,2-Man2) as substrate. Produces alpha-D-mannose 1-phosphate, which is the precursor of GDP-D-mannose. This chain is Beta-1,2-mannobiose phosphorylase, found in Thermoanaerobacter sp. (strain X514).